A 92-amino-acid polypeptide reads, in one-letter code: Defensin-like protein 226 (92 aa).

Positions 1-27 (MKCGVLFMISCLLITFLVLSHVREVES) are cleaved as a signal peptide. 4 disulfides stabilise this stretch: Cys-33-Cys-92, Cys-43-Cys-71, Cys-51-Cys-86, and Cys-69-Cys-88.

This sequence belongs to the DEFL family.

Its subcellular location is the secreted. The sequence is that of Defensin-like protein 226 (SCRL2) from Arabidopsis thaliana (Mouse-ear cress).